The chain runs to 215 residues: Ribose-5-phosphate isomerase A (215 aa).

Residues 26–29 (TGST), 79–82 (DGAD), and 92–95 (KGGG) contribute to the substrate site. E101 (proton acceptor) is an active-site residue. K119 lines the substrate pocket.

Belongs to the ribose 5-phosphate isomerase family. As to quaternary structure, homodimer.

The enzyme catalyses aldehydo-D-ribose 5-phosphate = D-ribulose 5-phosphate. Its pathway is carbohydrate degradation; pentose phosphate pathway; D-ribose 5-phosphate from D-ribulose 5-phosphate (non-oxidative stage): step 1/1. Functionally, catalyzes the reversible conversion of ribose-5-phosphate to ribulose 5-phosphate. This is Ribose-5-phosphate isomerase A from Stenotrophomonas maltophilia (strain R551-3).